A 78-amino-acid chain; its full sequence is Cytochrome c oxidase subunit 8, mitochondrial (78 aa).

Residues 1 to 27 constitute a mitochondrion transit peptide; the sequence is MLCQQMIRTTAKRSSNIMTRPIIMKRS. Residues 28–51 lie on the Mitochondrial matrix side of the membrane; the sequence is VHFKDGVYENIPFKVKGRKTPYAL. The chain crosses the membrane as a helical span at residues 52–73; sequence SHFGFFAIGFAVPFVACYVQLK. Residue lysine 74 is a topological domain, mitochondrial intermembrane. A propeptide spanning residues 75 to 78 is cleaved from the precursor; sequence SGAF.

It belongs to the cytochrome c oxidase VIIc family. Component of the cytochrome c oxidase (complex IV, CIV), a multisubunit enzyme composed of 12 subunits. The complex is composed of a catalytic core of 3 subunits COX1, COX2 and COX3, encoded in the mitochondrial DNA, and 9 supernumerary subunits COX4, COX5A (or COX5B), COX6, COX7, COX8, COX9, COX12, COX13 and COX26, which are encoded in the nuclear genome. The complex exists as a monomer or a dimer and forms supercomplexes (SCs) in the inner mitochondrial membrane with a dimer of ubiquinol-cytochrome c oxidoreductase (cytochrome b-c1 complex, complex III, CIII), resulting in 2 different assemblies (supercomplexes III(2)IV and III(2)IV(2)).

It localises to the mitochondrion inner membrane. It functions in the pathway energy metabolism; oxidative phosphorylation. Its function is as follows. Component of the cytochrome c oxidase, the last enzyme in the mitochondrial electron transport chain which drives oxidative phosphorylation. The respiratory chain contains 3 multisubunit complexes succinate dehydrogenase (complex II, CII), ubiquinol-cytochrome c oxidoreductase (cytochrome b-c1 complex, complex III, CIII) and cytochrome c oxidase (complex IV, CIV), that cooperate to transfer electrons derived from NADH and succinate to molecular oxygen, creating an electrochemical gradient over the inner membrane that drives transmembrane transport and the ATP synthase. Cytochrome c oxidase is the component of the respiratory chain that catalyzes the reduction of oxygen to water. Electrons originating from reduced cytochrome c in the intermembrane space (IMS) are transferred via the dinuclear copper A center (CU(A)) of COX2 and heme A of COX1 to the active site in COX1, a binuclear center (BNC) formed by heme A3 and copper B (CU(B)). The BNC reduces molecular oxygen to 2 water molecules using 4 electrons from cytochrome c in the IMS and 4 protons from the mitochondrial matrix. This is Cytochrome c oxidase subunit 8, mitochondrial (COX8) from Saccharomyces cerevisiae (strain ATCC 204508 / S288c) (Baker's yeast).